Reading from the N-terminus, the 200-residue chain is Small ribosomal subunit protein eS1 (200 aa).

It belongs to the eukaryotic ribosomal protein eS1 family.

This Thermococcus gammatolerans (strain DSM 15229 / JCM 11827 / EJ3) protein is Small ribosomal subunit protein eS1.